We begin with the raw amino-acid sequence, 342 residues long: Ankyrin repeat domain-containing protein 2A (342 aa).

Residues 1–41 (MASNSEKNPLLSDEKPKSTEENKSSKPESASGSSTSSAMPG) form a disordered region. A compositionally biased stretch (basic and acidic residues) spans 12–26 (SDEKPKSTEENKSSK). Residues 27 to 37 (PESASGSSTSS) show a composition bias toward low complexity. ANK repeat units follow at residues 217 to 246 (EEES…NKDE), 250 to 279 (EGRT…SVNA), 283 to 312 (NKNT…AVTL), and 316 to 342 (DEKT…DAFL). His223 and Glu246 together coordinate a 1,2-diacyl-3-O-(beta-D-galactosyl)-sn-glycerol. A 1,2-diacyl-sn-glycero-3-phospho-(1'-sn-glycerol) is bound by residues Tyr294 and Arg296.

In terms of assembly, interacts with TOM20-4, CYTB5-E, CBR1, APX3, APX5, TOC34 and GRF6. Binds to chloroplast outer envelope membrane (OEM) protein targeting signals, as well as to chloroplasts. Interacts with OEP7. Binds to HSP17.8 via its ankyrin repeats, this interaction enhances chaperone activity and chloroplast binding. Also interacts with HSP17.4A, HSP17.6A and HSP18.1. Binds specifically to two chloroplast glycolipids, monogalactosyldiacylglycerol (MGDG) and phosphatidylglycerol (PG). In terms of tissue distribution, ubiquitously expressed at basal level.

It is found in the cytoplasm. The protein resides in the nucleus. The protein localises to the plastid. It localises to the chloroplast outer membrane. In terms of biological role, exhibits chaperone activity toward chloroplast outer envelope membrane, mitochondrion outer membrane, endoplasmic reticulum membrane and peroxisomal proteins, by recruiting specific proteins containing a single transmembrane associated with an AKR2A-binding sequence (ABS) and subsequently binding glycolipids (e.g. monogalactosyldiacylglycerol (MGDG) and phosphatidylglycerol (PG)) present in the membrane of the target organelle. Seems to be involved in the regulation of hydrogen peroxide levels during biotic and abiotic stresses by optimizing the ascorbate peroxidase 3 (APX3) hydrogen peroxide-degrading activity. This regulation might be monitored by GRF6. Cytosolic targeting factor for chloroplast outer membrane (COM) proteins that mediates sorting and targeting of nascent chloroplast outer envelope membrane (OEM) proteins to the chloroplast. Facilitates the targeting of OEP7 to chloroplasts. Facilitates the targeting of APX3 to peroxisomes. Involved in cellular metabolism (e.g. peroxisome activity) and required for plant growth and development. The chain is Ankyrin repeat domain-containing protein 2A from Arabidopsis thaliana (Mouse-ear cress).